The chain runs to 184 residues: CASP-like protein 1U2 (184 aa).

Residues M1–K16 are Cytoplasmic-facing. A helical transmembrane segment spans residues A17–M37. The Extracellular portion of the chain corresponds to A38–P62. A helical transmembrane segment spans residues F63 to L83. The Cytoplasmic portion of the chain corresponds to R84–K100. The chain crosses the membrane as a helical span at residues L101 to T121. At G122–K153 the chain is on the extracellular side. Residues L154–L174 form a helical membrane-spanning segment. Topologically, residues P175–D184 are cytoplasmic.

Belongs to the Casparian strip membrane proteins (CASP) family. As to quaternary structure, homodimer and heterodimers.

It is found in the cell membrane. The sequence is that of CASP-like protein 1U2 from Oryza sativa subsp. japonica (Rice).